Reading from the N-terminus, the 288-residue chain is Bifunctional protein FolD (288 aa).

NADP(+) contacts are provided by residues 166-168 (GAS) and I232.

The protein belongs to the tetrahydrofolate dehydrogenase/cyclohydrolase family. In terms of assembly, homodimer.

The enzyme catalyses (6R)-5,10-methylene-5,6,7,8-tetrahydrofolate + NADP(+) = (6R)-5,10-methenyltetrahydrofolate + NADPH. It carries out the reaction (6R)-5,10-methenyltetrahydrofolate + H2O = (6R)-10-formyltetrahydrofolate + H(+). Its pathway is one-carbon metabolism; tetrahydrofolate interconversion. In terms of biological role, catalyzes the oxidation of 5,10-methylenetetrahydrofolate to 5,10-methenyltetrahydrofolate and then the hydrolysis of 5,10-methenyltetrahydrofolate to 10-formyltetrahydrofolate. This chain is Bifunctional protein FolD, found in Acidithiobacillus ferrooxidans (strain ATCC 23270 / DSM 14882 / CIP 104768 / NCIMB 8455) (Ferrobacillus ferrooxidans (strain ATCC 23270)).